A 438-amino-acid chain; its full sequence is Histidinol dehydrogenase (438 aa).

NAD(+) is bound by residues Tyr129, Gln193, and Asn216. 3 residues coordinate substrate: Thr239, Gln261, and His264. 2 residues coordinate Zn(2+): Gln261 and His264. Active-site proton acceptor residues include Glu330 and His331. The substrate site is built by His331, Asp364, Glu418, and His423. Residue Asp364 participates in Zn(2+) binding. Residue His423 participates in Zn(2+) binding.

Belongs to the histidinol dehydrogenase family. Requires Zn(2+) as cofactor.

The catalysed reaction is L-histidinol + 2 NAD(+) + H2O = L-histidine + 2 NADH + 3 H(+). It participates in amino-acid biosynthesis; L-histidine biosynthesis; L-histidine from 5-phospho-alpha-D-ribose 1-diphosphate: step 9/9. Functionally, catalyzes the sequential NAD-dependent oxidations of L-histidinol to L-histidinaldehyde and then to L-histidine. This is Histidinol dehydrogenase from Thermobifida fusca (strain YX).